The primary structure comprises 359 residues: Tyrosine-protein phosphatase non-receptor type 7 (359 aa).

The segment at 1-34 (MVQACEGRSRAQLPTLSLGADMTQPPPAKAPAKK) is disordered. An interaction with MAP kinases region spans residues 38-51 (LQERRGSSVALMLD). Position 44 is a phosphoserine (Ser44). Phosphothreonine is present on Thr66. Ser93 and Ser143 each carry phosphoserine. A Tyrosine-protein phosphatase domain is found at 97-349 (LEEEFLKIPS…QFLHHTLALY (253 aa)). Substrate-binding positions include Asp257, 290 to 296 (CSAGIGR), and Gln334. The Phosphocysteine intermediate role is filled by Cys290. Cys290 carries the cysteine sulfenic acid (-SOH) modification.

This sequence belongs to the protein-tyrosine phosphatase family. Non-receptor class subfamily. Post-translationally, oxidized at active site cysteine. Treatment with pervanadate (vanadate and H(2)O(2)) or with antigen enhanced oxidation of active site cysteine.

It is found in the cytoplasm. The protein localises to the cytoskeleton. The enzyme catalyses O-phospho-L-tyrosyl-[protein] + H2O = L-tyrosyl-[protein] + phosphate. Its activity is regulated as follows. Inhibited in cells after FCER1A triggering. May play a role in the regulation of T and B-lymphocyte development and signal transduction. The sequence is that of Tyrosine-protein phosphatase non-receptor type 7 (Ptpn7) from Rattus norvegicus (Rat).